The following is a 563-amino-acid chain: MGKPFTLSLSSLCLLLLSSACFAISSSKLNECQLNNLNALEPDHRVESEGGLIQTWNSQHPELKCAGVTVSKLTLNRNGLHLPSYSPYPRMIIIAQGKGALGVAIPGCPETFEEPQEQSNRRGSRSQKQQLQDSHQKIRHFNEGDVLVIPPGVPYWTYNTGDEPVVAISLLDTSNFNNQLDQTPRVFYLAGNPDIEYPETMQQQQQQKSHGGRKQGQHQQEEEEEGGSVLSGFSKHFLAQSFNTNEDIAEKLQSPDDERKQIVTVEGGLSVISPKWQEQQDEDEDEDEDDEDEQIPSHPPRRPSHGKREQDEDEDEDEDKPRPSRPSQGKREQDQDQDEDEDEDEDQPRKSREWRSKKTQPRRPRQEEPRERGCETRNGVEENICTLKLHENIARPSRADFYNPKAGRISTLNSLTLPALRQFQLSAQYVVLYKNGIYSPHWNLNANSVIYVTRGQGKVRVVNCQGNAVFDGELRRGQLLVVPQNFVVAEQAGEQGFEYIVFKTHHNAVTSYLKDVFRAIPSEVLAHSYNLRQSQVSELKYEGNWGPLVNPESQQGSPRVKVA.

Positions 1–23 (MGKPFTLSLSSLCLLLLSSACFA) are cleaved as a signal peptide. 2 disulfide bridges follow: Cys32–Cys65 and Cys108–Cys385. One can recognise a Cupin type-1 1 domain in the interval 37–250 (LNALEPDHRV…SFNTNEDIAE (214 aa)). Disordered stretches follow at residues 108 to 136 (CPETFEEPQEQSNRRGSRSQKQQLQDSHQ), 199 to 228 (ETMQQQQQQKSHGGRKQGQHQQEEEEEGGS), and 266 to 375 (EGGL…RGCE). Acidic residues-rich tracts occupy residues 279-294 (QQDEDEDEDEDDEDEQ) and 335-346 (QDQDEDEDEDED). 2 stretches are compositionally biased toward basic and acidic residues: residues 347–356 (QPRKSREWRS) and 364–375 (PRQEEPRERGCE). One can recognise a Cupin type-1 2 domain in the interval 391 to 537 (ENIARPSRAD…SYNLRQSQVS (147 aa)). The Vacuolar targeting signal motif lies at 551–563 (PESQQGSPRVKVA).

Belongs to the 11S seed storage protein (globulins) family. Hexamer; each subunit is composed of an acidic and a basic chain derived from a single precursor and linked by a disulfide bond. Post-translationally, during soybean germination, seed storage proteins are hydrolyzed by protease/26S proteasome. Exclusively in seeds during embryogenesis.

Its subcellular location is the endoplasmic reticulum. It is found in the protein storage vacuole. Functionally, glycinin is the major seed storage protein of soybean. Glycinin basic peptides (GBPs), and, to a lower extent, glycinin exhibit antibacterial activity against Gram-negative and Gram-positive bacteria (e.g. L.monocytogenes, B.subtilis, E.coli and S.enteritidis) by forming pores and aggregating in transmembranes, leading to membrane permeability and, eventually, cell death. The polypeptide is Glycinin G4 (Glycine max (Soybean)).